The sequence spans 197 residues: LexA repressor (197 aa).

A DNA-binding region (H-T-H motif) is located at residues 28 to 47 (VREIARRFRITPRGALLHLI). Active-site for autocatalytic cleavage activity residues include Ser119 and Lys156.

It belongs to the peptidase S24 family. Homodimer.

It catalyses the reaction Hydrolysis of Ala-|-Gly bond in repressor LexA.. Functionally, represses a number of genes involved in the response to DNA damage (SOS response), including recA and lexA. In the presence of single-stranded DNA, RecA interacts with LexA causing an autocatalytic cleavage which disrupts the DNA-binding part of LexA, leading to derepression of the SOS regulon and eventually DNA repair. This Thermotoga sp. (strain RQ2) protein is LexA repressor.